Consider the following 90-residue polypeptide: Probable Fe(2+)-trafficking protein (90 aa).

Belongs to the Fe(2+)-trafficking protein family.

Could be a mediator in iron transactions between iron acquisition and iron-requiring processes, such as synthesis and/or repair of Fe-S clusters in biosynthetic enzymes. The polypeptide is Probable Fe(2+)-trafficking protein (Marinobacter nauticus (strain ATCC 700491 / DSM 11845 / VT8) (Marinobacter aquaeolei)).